We begin with the raw amino-acid sequence, 601 residues long: NADH-quinone oxidoreductase subunit C/D (601 aa).

The segment at M1–Q191 is NADH dehydrogenase I subunit C. The segment at D215–R601 is NADH dehydrogenase I subunit D.

This sequence in the N-terminal section; belongs to the complex I 30 kDa subunit family. The protein in the C-terminal section; belongs to the complex I 49 kDa subunit family. As to quaternary structure, NDH-1 is composed of 13 different subunits. Subunits NuoB, CD, E, F, and G constitute the peripheral sector of the complex.

Its subcellular location is the cell inner membrane. It catalyses the reaction a quinone + NADH + 5 H(+)(in) = a quinol + NAD(+) + 4 H(+)(out). NDH-1 shuttles electrons from NADH, via FMN and iron-sulfur (Fe-S) centers, to quinones in the respiratory chain. The immediate electron acceptor for the enzyme in this species is believed to be ubiquinone. Couples the redox reaction to proton translocation (for every two electrons transferred, four hydrogen ions are translocated across the cytoplasmic membrane), and thus conserves the redox energy in a proton gradient. This Aeromonas hydrophila subsp. hydrophila (strain ATCC 7966 / DSM 30187 / BCRC 13018 / CCUG 14551 / JCM 1027 / KCTC 2358 / NCIMB 9240 / NCTC 8049) protein is NADH-quinone oxidoreductase subunit C/D.